A 370-amino-acid chain; its full sequence is Metallophosphoesterase 1 homolog (370 aa).

Residues 7-27 (CFVIVLCALIFCEYVADFVVL) traverse the membrane as a helical segment. A divalent metal cation is bound by residues D52, D94, N132, H225, H275, and H277. The chain crosses the membrane as a helical span at residues 328 to 348 (FVFNSYLSAGILCLIVIGFQL).

The protein belongs to the metallophosphoesterase superfamily. MPPE1 family. It depends on Mn(2+) as a cofactor.

The protein localises to the membrane. In terms of biological role, metallophosphoesterase. The sequence is that of Metallophosphoesterase 1 homolog (PGAP5) from Drosophila melanogaster (Fruit fly).